A 472-amino-acid polypeptide reads, in one-letter code: 12S seed storage protein CRA1 (472 aa).

Positions 1 to 24 (MARVSSLLSFCLTLLILFHGYAAQ) are cleaved as a signal peptide. Cystine bridges form between Cys-36-Cys-69 and Cys-112-Cys-289. The 196-residue stretch at 41–236 (LNALEPSHVL…ALKIDLQTAQ (196 aa)) folds into the Cupin type-1 1 domain. The residue at position 115 (Thr-115) is a Phosphothreonine. The interval 259 to 283 (RPPLRGQRPQEEEEEEGRHGRHGNG) is disordered. The Cupin type-1 2 domain occupies 295 to 444 (DNLDDPSRAD…GFQISPEEAR (150 aa)). Residue Tyr-312 is modified to Phosphotyrosine. Ser-314 bears the Phosphoserine mark. A phosphothreonine mark is found at Thr-408 and Thr-433.

Belongs to the 11S seed storage protein (globulins) family. As to quaternary structure, hexamer; each subunit is composed of an acidic and a basic chain derived from a single precursor and linked by a disulfide bond. In terms of processing, phosphorylated in seeds on some Tyr residues in response to abscisic acid (ABA). Post-translationally, proteolytically processed during seed maturation at a conserved Asn-Gly peptide bond by an asparaginyl endopeptidase to produce two mature polypeptides referred to as alpha and beta subunits that are joined together by a disulfide bond. As to expression, accumulates in seeds 8 days after anthesis.

Its subcellular location is the protein storage vacuole. Its function is as follows. Seed storage protein. The polypeptide is 12S seed storage protein CRA1 (CRA1) (Arabidopsis thaliana (Mouse-ear cress)).